Here is a 431-residue protein sequence, read N- to C-terminus: Histidinol dehydrogenase (431 aa).

The NAD(+) site is built by Tyr127, Gln185, and Asn208. Substrate contacts are provided by Ser234, Gln256, and His259. Zn(2+)-binding residues include Gln256 and His259. Residues Glu323 and His324 each act as proton acceptor in the active site. 4 residues coordinate substrate: His324, Asp357, Glu411, and His416. Asp357 serves as a coordination point for Zn(2+). His416 provides a ligand contact to Zn(2+).

It belongs to the histidinol dehydrogenase family. Requires Zn(2+) as cofactor.

It catalyses the reaction L-histidinol + 2 NAD(+) + H2O = L-histidine + 2 NADH + 3 H(+). Its pathway is amino-acid biosynthesis; L-histidine biosynthesis; L-histidine from 5-phospho-alpha-D-ribose 1-diphosphate: step 9/9. Its function is as follows. Catalyzes the sequential NAD-dependent oxidations of L-histidinol to L-histidinaldehyde and then to L-histidine. This is Histidinol dehydrogenase from Vibrio parahaemolyticus serotype O3:K6 (strain RIMD 2210633).